Reading from the N-terminus, the 91-residue chain is Large ribosomal subunit protein eL43 (91 aa).

The C4-type zinc-finger motif lies at 39 to 60; sequence CPFCGKDAMRRGAVGIWNCSKC.

The protein belongs to the eukaryotic ribosomal protein eL43 family.

The sequence is that of Large ribosomal subunit protein eL43 (rpl-37a) from Ostertagia ostertagi (Brown stomach worm).